The following is a 55-amino-acid chain: ATP synthase F(0) complex subunit 8 (55 aa).

Residues 7–24 (SPWFFIMLTTWLTFSLII) form a helical membrane-spanning segment.

This sequence belongs to the ATPase protein 8 family. Component of the ATP synthase complex composed at least of ATP5F1A/subunit alpha, ATP5F1B/subunit beta, ATP5MC1/subunit c (homooctomer), MT-ATP6/subunit a, MT-ATP8/subunit 8, ATP5ME/subunit e, ATP5MF/subunit f, ATP5MG/subunit g, ATP5MK/subunit k, ATP5MJ/subunit j, ATP5F1C/subunit gamma, ATP5F1D/subunit delta, ATP5F1E/subunit epsilon, ATP5PF/subunit F6, ATP5PB/subunit b, ATP5PD/subunit d, ATP5PO/subunit OSCP. ATP synthase complex consists of a soluble F(1) head domain (subunits alpha(3) and beta(3)) - the catalytic core - and a membrane F(0) domain - the membrane proton channel (subunits c, a, 8, e, f, g, k and j). These two domains are linked by a central stalk (subunits gamma, delta, and epsilon) rotating inside the F1 region and a stationary peripheral stalk (subunits F6, b, d, and OSCP).

The protein localises to the mitochondrion membrane. Subunit 8, of the mitochondrial membrane ATP synthase complex (F(1)F(0) ATP synthase or Complex V) that produces ATP from ADP in the presence of a proton gradient across the membrane which is generated by electron transport complexes of the respiratory chain. ATP synthase complex consist of a soluble F(1) head domain - the catalytic core - and a membrane F(1) domain - the membrane proton channel. These two domains are linked by a central stalk rotating inside the F(1) region and a stationary peripheral stalk. During catalysis, ATP synthesis in the catalytic domain of F(1) is coupled via a rotary mechanism of the central stalk subunits to proton translocation. In vivo, can only synthesize ATP although its ATP hydrolase activity can be activated artificially in vitro. Part of the complex F(0) domain. This Columbina passerina (Common ground-dove) protein is ATP synthase F(0) complex subunit 8.